The primary structure comprises 210 residues: Cuticle collagen 2C (210 aa).

Residues 11–210 are disordered; sequence CTGGQAGPPG…GVFFEDGTRR (200 aa). Composition is skewed to pro residues over residues 40–76 and 88–103; these read PGRPPVQPCDPIPIPPCKPCPQGRPGPPGPIGPPGEP and DAPPGPPGPKGPPGPP. Residues 105 to 122 show a composition bias toward low complexity; that stretch reads KAGAPGAAGQPGANAPSE. Residues 123–144 are compositionally biased toward pro residues; it reads PLVPGPPGPPGPTGPEGPPGPN. A compositionally biased stretch (low complexity) spans 167–179; sequence HPGAPGNAGHPGQ.

This sequence belongs to the cuticular collagen family.

In terms of biological role, nematode cuticles are composed largely of collagen-like proteins. The cuticle functions both as an exoskeleton and as a barrier to protect the worm from its environment. This Haemonchus contortus (Barber pole worm) protein is Cuticle collagen 2C (2C).